A 480-amino-acid chain; its full sequence is V-type ATP synthase beta chain 2 (480 aa).

It belongs to the ATPase alpha/beta chains family.

Produces ATP from ADP in the presence of a proton gradient across the membrane. The V-type beta chain is a regulatory subunit. The chain is V-type ATP synthase beta chain 2 (atpB2) from Treponema pallidum (strain Nichols).